A 182-amino-acid chain; its full sequence is D-lyxose ketol-isomerase (182 aa).

Mn(2+)-binding residues include H74, H76, E87, and H142.

It belongs to the D-lyxose ketol-isomerase family. In terms of assembly, homodimer. Requires Mn(2+) as cofactor.

The catalysed reaction is D-lyxose = D-xylulose. In terms of biological role, sugar isomerase that catalyzes the reversible isomerization of D-lyxose to D-xylulose. Shows weak activity with D-mannose and L-ribose. In Cohnella laeviribosi, this protein is D-lyxose ketol-isomerase.